The primary structure comprises 553 residues: Hydroxylamine reductase (553 aa).

Residues cysteine 3, cysteine 6, cysteine 18, and cysteine 25 each coordinate [2Fe-2S] cluster. Hybrid [4Fe-2O-2S] cluster contacts are provided by histidine 252, glutamate 276, cysteine 320, cysteine 408, cysteine 436, cysteine 461, glutamate 495, and lysine 497. Residue cysteine 408 is modified to Cysteine persulfide.

The protein belongs to the HCP family. The cofactor is [2Fe-2S] cluster. It depends on hybrid [4Fe-2O-2S] cluster as a cofactor.

The protein resides in the cytoplasm. The enzyme catalyses A + NH4(+) + H2O = hydroxylamine + AH2 + H(+). Functionally, catalyzes the reduction of hydroxylamine to form NH(3) and H(2)O. The protein is Hydroxylamine reductase of Vibrio parahaemolyticus serotype O3:K6 (strain RIMD 2210633).